We begin with the raw amino-acid sequence, 494 residues long: UPF0371 protein SP70585_0405 (494 aa).

The protein belongs to the UPF0371 family.

The sequence is that of UPF0371 protein SP70585_0405 from Streptococcus pneumoniae (strain 70585).